We begin with the raw amino-acid sequence, 632 residues long: Cytosolic Fe-S cluster assembly factor NAR1 (632 aa).

Residue C20 coordinates [4Fe-4S] cluster. A disordered region spans residues 27 to 53 (LPAKPEDSSNPYEVTTEDKAAASQPPP). 3 residues coordinate [4Fe-4S] cluster: C62, C65, and C68. Disordered stretches follow at residues 99 to 119 (WQTQ…NGHS) and 210 to 231 (LSPE…DTTP). Residues 101-119 (TQNGTNGTNGTNGTTNGHS) are compositionally biased toward low complexity. The span at 211 to 221 (SPETSNPSTKP) shows a compositional bias: polar residues. Residues C240, C295, C486, and C490 each contribute to the [4Fe-4S] cluster site. Positions 542–573 (GSDSEEEKVDQDGDQNMQDATTNGHTSEPDIV) are disordered. The segment covering 544 to 554 (DSEEEKVDQDG) has biased composition (acidic residues). Residues 555–567 (DQNMQDATTNGHT) are compositionally biased toward polar residues.

This sequence belongs to the NARF family.

Functionally, component of the cytosolic Fe/S protein assembly machinery. Required for maturation of extramitochondrial Fe/S proteins. May play a role in the transfer of pre-assembled Fe/S clusters to target apoproteins. In Phaeosphaeria nodorum (strain SN15 / ATCC MYA-4574 / FGSC 10173) (Glume blotch fungus), this protein is Cytosolic Fe-S cluster assembly factor NAR1 (NAR1).